The following is a 320-amino-acid chain: Methionine import ATP-binding protein MetN (320 aa).

Positions 2-237 constitute an ABC transporter domain; that stretch reads IEIKNVSKYF…PSSEMKKLIG (236 aa). 34–41 serves as a coordination point for ATP; that stretch reads GHSGAGKS.

Belongs to the ABC transporter superfamily. Methionine importer (TC 3.A.1.24) family. The complex is composed of two ATP-binding proteins (MetN), two transmembrane proteins (MetI) and a solute-binding protein (MetQ).

Its subcellular location is the cell membrane. It carries out the reaction L-methionine(out) + ATP + H2O = L-methionine(in) + ADP + phosphate + H(+). The enzyme catalyses D-methionine(out) + ATP + H2O = D-methionine(in) + ADP + phosphate + H(+). In terms of biological role, part of the ABC transporter complex MetNIQ involved in methionine import. Responsible for energy coupling to the transport system. This Clostridium acetobutylicum (strain ATCC 824 / DSM 792 / JCM 1419 / IAM 19013 / LMG 5710 / NBRC 13948 / NRRL B-527 / VKM B-1787 / 2291 / W) protein is Methionine import ATP-binding protein MetN.